We begin with the raw amino-acid sequence, 1251 residues long: Myosin-1 (1251 aa).

Positions 1 to 37 are disordered; that stretch reads MGQSKRPFKNKEEKKSRGFGRSRHDDAGAGGRPQVKK. Positions 9–27 are enriched in basic and acidic residues; the sequence is KNKEEKKSRGFGRSRHDDA. A Myosin motor domain is found at 48–727; it reads IGVSDLTLLS…TLFALEHMRD (680 aa). Position 141-148 (141-148) interacts with ATP; that stretch reads GESGAGKT. Position 369 is a phosphoserine (S369). Residues 416-498 are actin-binding; that stretch reads TIGILDIYGF…PGVFAALNDA (83 aa). 2 consecutive IQ domains span residues 731–751 and 752–777; these read HNMA…RTEC and AIRI…QGHK. One can recognise a TH1 domain in the interval 785–980; it reads RRRYSLVGSR…PGEPANSVSK (196 aa). Disordered regions lie at residues 958–1093 and 1135–1227; these read RDDV…SNEL and AKTP…ASIA. A compositionally biased stretch (low complexity) spans 1040–1052; the sequence is VAQSVTAVAAAHA. The segment covering 1061-1073 has biased composition (pro residues); sequence RPPPPPPPTQPPA. The 62-residue stretch at 1074 to 1135 folds into the SH3 domain; that stretch reads PKKDTAKALY…PEAYLEPIVA (62 aa). The span at 1139 to 1148 shows a compositional bias: pro residues; it reads SLPPPPPSLP. 2 stretches are compositionally biased toward polar residues: residues 1150 to 1161 and 1216 to 1225; these read QSKSAVSNTLPN and ATPSSLSNAS.

This sequence belongs to the TRAFAC class myosin-kinesin ATPase superfamily. Myosin family. Phosphorylation of the TEDS site (Ser-369) is required for the polarization of the actin cytoskeleton. Phosphorylation probably activates the myosin-I ATPase activity.

It localises to the cytoplasm. It is found in the cytoskeleton. The protein localises to the actin patch. Functionally, type-I myosin implicated in the organization of the actin cytoskeleton. Required for proper actin cytoskeleton polarization. At the cell cortex, assembles in patch-like structures together with proteins from the actin-polymerizing machinery and promotes actin assembly. Functions as actin nucleation-promoting factor (NPF) for the Arp2/3 complex. The sequence is that of Myosin-1 (MYO1) from Coccidioides immitis (strain RS) (Valley fever fungus).